The chain runs to 79 residues: Raniseptin-9 (79 aa).

An N-terminal signal peptide occupies residues 1-22 (MAFLKKSLFLVLFLGIVSLSIC). Residues 23 to 49 (EEEKREGEEEEKQEEENEELSEEELRE) constitute a propeptide that is removed on maturation. Residues 27-46 (REGEEEEKQEEENEELSEEE) are disordered. Acidic residues predominate over residues 30–44 (EEEEKQEEENEELSE).

Belongs to the frog skin active peptide (FSAP) family. Dermaseptin subfamily. In terms of tissue distribution, expressed by the skin glands.

The protein localises to the secreted. Its function is as follows. Has antibacterial activity. The chain is Raniseptin-9 from Boana raniceps (Chaco tree frog).